The chain runs to 53 residues: Cytochrome c-552 (53 aa).

Residues Cys19, Cys22, His23, and Met44 each contribute to the heme c site.

In terms of processing, binds 1 heme c group covalently per subunit.

It localises to the cell membrane. The protein is Cytochrome c-552 of Schinkia azotoformans (Bacillus azotoformans).